Consider the following 455-residue polypeptide: Succinyl-CoA--L-malate CoA-transferase alpha subunit (455 aa).

A disordered region spans residues 1-58 (MAKASRLTRSTGQPTEVSEGQVTGTSEMPPTGEEPSGHAESKPPASDPMSTPGTGQEQ). 2 stretches are compositionally biased toward polar residues: residues 7–28 (LTRS…TSEM) and 48–58 (PMSTPGTGQEQ). Asp-227 (nucleophile) is an active-site residue.

It belongs to the CoA-transferase III family. Forms a large complex composed of six heterodimers (alpha, beta).

The catalysed reaction is succinyl-CoA + (S)-malate = (S)-malyl-CoA + succinate. It catalyses the reaction (3S)-citramalate + succinyl-CoA = (3S)-citramalyl-CoA + succinate. In terms of biological role, involved in the 3-hydroxypropionate cycle used for autotrophic carbon dioxide fixation. Catalyzes the transfer of CoA moiety from succinyl-CoA to L-malate to yield L-malyl-CoA. This Chloroflexus aurantiacus (strain ATCC 29366 / DSM 635 / J-10-fl) protein is Succinyl-CoA--L-malate CoA-transferase alpha subunit (smtA).